Here is a 466-residue protein sequence, read N- to C-terminus: MTVRVRGIYATALTRLLREAGHEVVQASGPIEDRFDGEFADERAAVTVTTTDDQQGVGVIGDHDAAAAVTDRLTELGRDTLHWSDPTPEGAIYAGTVTDTLGSGAVVDLGDGEGFLPYSSSDERVETGDTLRVQVVEASAPWTDGRPVLDTTVAVRGSLLSLVRGETASTPGTGGPAMLDLIAAEPRDGWGVSWESASEDASFDALAAALDAANDRAAAIDASLDGADAPEDCAPTRYDEGRSTVWLWFGRESRFALDEVRREVTSTMPGHHRVKAGDRAASAAVDYVEALCDDPETGETDFPFAVTTRQFGPQVGGSLSLGHGKPDGRLITLGNGEVQSVDDDGTVTIEREMSPGGTYDALGVPKEAGDIAETKVKEGRWWYPTVYRDSDGEKKGTYVNVCTPVEIFPDTARYVDLHVDVVKHADGAVERVDDDELDAAVERGHISEPLAERARSVAAAVKSALE.

Residues 90-152 (GAIYAGTVTD…TDGRPVLDTT (63 aa)) form the S1 motif domain.

The protein belongs to the FAU-1 family.

Probable RNase involved in rRNA stability through maturation and/or degradation of precursor rRNAs. Binds to RNA in loop regions with AU-rich sequences. The polypeptide is Probable ribonuclease FAU-1 (Haloarcula marismortui (strain ATCC 43049 / DSM 3752 / JCM 8966 / VKM B-1809) (Halobacterium marismortui)).